The following is a 144-amino-acid chain: Maximins 1/H12 (144 aa).

The N-terminal stretch at 1–18 (MNFKYIVAVSFLIASAYA) is a signal peptide. A propeptide spanning residues 19 to 43 (RSEENDEQSLSQRDVLEEESLREIR) is cleaved from the precursor. At Asn70 the chain carries Asparagine amide. Residues 74-123 (TAEEHEVMKRLEVVMRDLDSLDYPEEASERETRDFNQEEIANLYTKKEKR) constitute a propeptide that is removed on maturation. At Ile143 the chain carries Isoleucine amide.

It belongs to the bombinin family. In terms of tissue distribution, expressed by the skin glands.

The protein resides in the secreted. Maximin-1 shows antibacterial activity against both Gram-positive and Gram-negative bacteria. It also shows antimicrobial activity against the fungus C.albicans, but not against A.flavus nor P.uticale. It has little hemolytic activity. It possess a significant cytotoxicity against tumor cell lines. It does not possess a significant anti-HIV activity. It shows high spermicidal activity. In terms of biological role, maximin-H12 shows antimicrobial activity against bacteria and against the fungus C.albicans. Shows strong hemolytic activity. The protein is Maximins 1/H12 of Bombina maxima (Giant fire-bellied toad).